A 524-amino-acid chain; its full sequence is Protein-export membrane protein SecD (524 aa).

Transmembrane regions (helical) follow at residues 10 to 30 (VIFLVAAILLSTFALFSPTMG), 366 to 386 (KFDSLITGIVAVLAVAGVVFI), 389 to 409 (GKPQVALPMIVTGLSEVYILL), 420 to 442 (DLSVIAGFIAVIGTGVDDLIIIA), 465 to 485 (FWVIGAAAATTIIAMSPLAVL), and 487 to 507 (LGDLQGFAIFTILGVIVGVLV).

The protein belongs to the SecD/SecF family. SecD subfamily. In terms of assembly, part of the protein translocation apparatus. Forms a homodimer and complexes with SecF.

It localises to the cell membrane. In terms of biological role, involved in protein export. This Haloferax volcanii (strain ATCC 29605 / DSM 3757 / JCM 8879 / NBRC 14742 / NCIMB 2012 / VKM B-1768 / DS2) (Halobacterium volcanii) protein is Protein-export membrane protein SecD.